The primary structure comprises 407 residues: 1-deoxy-D-xylulose 5-phosphate reductoisomerase (407 aa).

Residues threonine 25, glycine 26, serine 27, isoleucine 28, asparagine 53, and asparagine 136 each contribute to the NADPH site. Position 137 (lysine 137) interacts with 1-deoxy-D-xylulose 5-phosphate. NADPH is bound at residue glutamate 138. Aspartate 162 is a Mn(2+) binding site. Positions 163, 164, 188, and 211 each coordinate 1-deoxy-D-xylulose 5-phosphate. Residue glutamate 164 participates in Mn(2+) binding. Glycine 217 contacts NADPH. 4 residues coordinate 1-deoxy-D-xylulose 5-phosphate: serine 224, asparagine 229, lysine 230, and glutamate 233. A Mn(2+)-binding site is contributed by glutamate 233.

The protein belongs to the DXR family. Mg(2+) is required as a cofactor. The cofactor is Mn(2+).

It carries out the reaction 2-C-methyl-D-erythritol 4-phosphate + NADP(+) = 1-deoxy-D-xylulose 5-phosphate + NADPH + H(+). It participates in isoprenoid biosynthesis; isopentenyl diphosphate biosynthesis via DXP pathway; isopentenyl diphosphate from 1-deoxy-D-xylulose 5-phosphate: step 1/6. Functionally, catalyzes the NADPH-dependent rearrangement and reduction of 1-deoxy-D-xylulose-5-phosphate (DXP) to 2-C-methyl-D-erythritol 4-phosphate (MEP). The sequence is that of 1-deoxy-D-xylulose 5-phosphate reductoisomerase from Bradyrhizobium sp. (strain BTAi1 / ATCC BAA-1182).